Here is a 1678-residue protein sequence, read N- to C-terminus: Hispidin synthase (1678 aa).

An adenylation (A) domain region spans residues 33–453; it reads GEHRWSYREL…WLGRNTDFIQ (421 aa). Residues 586–661 enclose the Carrier 1 domain; that stretch reads DELSNTVKHI…SLSNAVYAKL (76 aa). S620 carries the O-(pantetheine 4'-phosphoryl)serine modification. One can recognise a Ketosynthase family 3 (KS3) domain in the interval 683-1108; it reads GKEIVVVGQA…GTLGGIVLEA (426 aa). Catalysis depends on for beta-ketoacyl synthase activity residues C852, H988, and H1029. The malonyl-CoA:ACP transacylase (MAT) domain stretch occupies residues 1201–1499; it reads YKRGALAFAF…VAWSLLLSNG (299 aa). The segment at 1562-1582 is disordered; sequence EETLSSGSSTPTLENTDLDSG. Over residues 1564–1576 the composition is skewed to polar residues; the sequence is TLSSGSSTPTLEN. The region spanning 1597–1672 is the Carrier 2 domain; that stretch reads DDLRDSIVSS…EMVSNLVEQA (76 aa). S1632 is subject to O-(pantetheine 4'-phosphoryl)serine.

In the N-terminal section; belongs to the NRP synthetase family.

It catalyses the reaction (E)-caffeate + 2 malonyl-CoA + ATP + H(+) = hispidin + AMP + 2 CO2 + diphosphate + 2 CoA. Its pathway is secondary metabolite biosynthesis. Functionally, PKS-NRPS hybrid synthetase; part of the gene cluster that mediates the fungal bioluminescence cycle. Performs the biosynthesis of hispidin from caffeic acid by two cycles of addition of malonyl units followed by lactonization. The fungal bioluminescence cycle begins with the hispidin synthetase that catalyzes the formation of hispidin which is further hydroxylated by the hispidin-3-hydroxylase, yielding the fungal luciferin 3-hydroxyhispidin. The luciferase then produces an endoperoxide as a high-energy intermediate with decomposition that yields oxyluciferin (also known as caffeoylpyruvate) and light emission. Oxyluciferin can be recycled to caffeic acid by caffeoylpyruvate hydrolase. This is Hispidin synthase from Neonothopanus nambi (Agaricus nambi).